The primary structure comprises 196 residues: MQTNELLDKIFRGARSQNGWLPTPVPDSKLRELYDLMKFGPTSVNCSPARLVFVRTEEGREKLRPALAPGNVEKTMAAPVVAIVGYDTRFYEQLPDLFPHNPAVKAWFEGDEKVDFANTTAFRNGTLQGGYLIAAARALGLDCGPMSGFNNQAIDQAFFAGTSIRSNFICGLGHGDPEKVFARSPRLSFEQACQLA.

This sequence belongs to the nitroreductase family. HadB/RutE subfamily. Requires FMN as cofactor.

This is Putative NADH dehydrogenase/NAD(P)H nitroreductase Reut_A1586 from Cupriavidus pinatubonensis (strain JMP 134 / LMG 1197) (Cupriavidus necator (strain JMP 134)).